Consider the following 210-residue polypeptide: MRRRAGPEPHDLLLGMAPAHLPENAPAWVCAALKAGWPVVVRRAPADPARVAIGVRGLAREQRWAGWMPLAAITRRLRPEALGQREPAMLRDLPAWRALRDLRAPLNALGLAWGVTGGAGFELASGVAVLHPDSDLDLLLRTPRPFPRDDALRLLQCFEQCPCRIDLQLQTPAGGVALREWAEGRPRVLAKGSEAPLLLEDPWRIAEVEA.

Residues D135 and D137 contribute to the active site.

The protein belongs to the MdcG family.

The catalysed reaction is apo-[malonate decarboxylase ACP] + 2'-(5''-triphospho-alpha-D-ribosyl)-3'-dephospho-CoA = holo-[malonate decarboxylase ACP] + diphosphate. Its function is as follows. Transfers 2'-(5-triphosphoribosyl)-3'-dephosphocoenzyme-A to the apo-[acyl-carrier-protein] of the malonate decarboxylase to yield holo-[acyl-carrier-protein]. This Pseudomonas aeruginosa (strain ATCC 15692 / DSM 22644 / CIP 104116 / JCM 14847 / LMG 12228 / 1C / PRS 101 / PAO1) protein is Phosphoribosyl-dephospho-CoA transferase.